The primary structure comprises 1863 residues: E3 ubiquitin-protein ligase ubr3 (1863 aa).

Residues 80 to 151 form a UBR-type zinc finger; it reads TLCGLVWTAN…ESGFCNRHRL (72 aa). Disordered stretches follow at residues 302-330, 970-995, and 1128-1152; these read LDDS…SSTK, PEVE…SATF, and IPPK…RARE. 2 stretches are compositionally biased toward basic and acidic residues: residues 971-984 and 1134-1152; these read EVER…ERET and SPGD…RARE. An RING-type; degenerate zinc finger spans residues 1270–1328; sequence DSSCLQSVSIGWDGGVYVQTCGHTLHIDCHKSYMESLRNDQVLQGISVDKGEFTCPLCR.

The protein belongs to the E3 ubiquitin-protein ligase UBR1-like family.

It carries out the reaction S-ubiquitinyl-[E2 ubiquitin-conjugating enzyme]-L-cysteine + [acceptor protein]-L-lysine = [E2 ubiquitin-conjugating enzyme]-L-cysteine + N(6)-ubiquitinyl-[acceptor protein]-L-lysine.. It functions in the pathway protein modification; protein ubiquitination. In terms of biological role, E3 ubiquitin-protein ligase which is a component of the N-end rule pathway. Recognizes and binds to proteins bearing specific N-terminal residues, leading to their ubiquitination and subsequent degradation. Positively regulates hedgehog/shh-signaling pathways that function in eye development, neuronal specification and somite development. Activation of shh up-regulates transcription of ubr3, which in turn promotes hedgehog/shh signaling possibly by controlling negative regulators such as Kif7. The polypeptide is E3 ubiquitin-protein ligase ubr3 (Danio rerio (Zebrafish)).